Here is a 315-residue protein sequence, read N- to C-terminus: GTPase Era (315 aa).

Positions 21-190 constitute an Era-type G domain; the sequence is RSGFVAIVGR…QSALEARLDP (170 aa). The tract at residues 29 to 36 is G1; that stretch reads GRPNVGKS. 29 to 36 provides a ligand contact to GTP; the sequence is GRPNVGKS. The interval 55–59 is G2; it reads QTTRN. Residues 76–79 are G3; sequence DTPG. Residues 76-80 and 138-141 each bind GTP; these read DTPGI and NKQD. The tract at residues 138–141 is G4; the sequence is NKQD. A G5 region spans residues 169–171; that stretch reads FSA. Residues 221-297 form the KH type-2 domain; it reads TRQEVPHSVA…YLKLFVKVEP (77 aa).

It belongs to the TRAFAC class TrmE-Era-EngA-EngB-Septin-like GTPase superfamily. Era GTPase family. As to quaternary structure, monomer.

It is found in the cytoplasm. The protein resides in the cell inner membrane. Functionally, an essential GTPase that binds both GDP and GTP, with rapid nucleotide exchange. Plays a role in 16S rRNA processing and 30S ribosomal subunit biogenesis and possibly also in cell cycle regulation and energy metabolism. The polypeptide is GTPase Era (Synechocystis sp. (strain ATCC 27184 / PCC 6803 / Kazusa)).